The chain runs to 837 residues: Amyloid-beta A4 precursor protein-binding family A member 1 (837 aa).

Disordered regions lie at residues 1–93 (MNHL…DTAE), 238–342 (YDER…SKEK), and 358–435 (EEVK…ESRK). Residues 23 to 38 (ESVEADLEHPEVEEEQ) are compositionally biased toward acidic residues. 7 positions are modified to phosphoserine: serine 78, serine 242, serine 246, serine 248, serine 263, serine 280, and serine 285. The interval 226–314 (YRQEALGARL…TPAGGRPDSP (89 aa)) is munc-18-1 binding. Residues 238–254 (YDERSDGESDSPEKEAE) are compositionally biased toward basic and acidic residues. Position 305 is a phosphothreonine (threonine 305). Phosphoserine is present on residues serine 313 and serine 367. At threonine 370 the chain carries Phosphothreonine. Residues 373 to 436 (EPKEPIWVMR…ASTNKESRKS (64 aa)) form an LIN-2/CASK binding region. Residues 387-398 (PTRDCDDQRPMD) are compositionally biased toward basic and acidic residues. A compositionally biased stretch (low complexity) spans 399–418 (GDSPSPGSSSPLGAESSSTS). 4 positions are modified to phosphoserine: serine 401, serine 403, serine 408, and serine 568. The 187-residue stretch at 457 to 643 (DGIIFAANYL…LLNTQDMYND (187 aa)) folds into the PID domain. The segment at 626–641 (LSQKEYSDLLNTQDMY) is autoinhibitory helix linker. PDZ domains follow at residues 656-742 (DVFI…IVRC) and 747-822 (TVLI…TMPA).

Part of a multimeric complex containing STXBP1 and STX1A. Interacts with STXBP1. Also part of the brain-specific heterotrimeric complex LIN-10/X11-alpha, LIN-2/CASK, and LIN7. Component of the brain-specific heterotrimeric complex (LIN-10-LIN-2-LIN-7 complex) composed of at least APBA1, CASK, and LIN7, which associates with the motor protein KIF17 to transport vesicles along microtubules. Within the complex, interacts (via PDZ domain) with the motor protein KIF17; the interaction is direct and is required for association of KIF17 with the cargo that is to be transported. Both isoform 1 and isoform 2 bind to the cytoplasmic domain of amyloid protein (APP). Interacts (via PDZ 1 and 2 domains) with FSPB. Isoform 2, but not isoform 1, interacts (via its truncated PID domain) with active, GTP-bound RAB6A and RAB6B. Brain and spinal cord. Isoform 2 is expressed in testis and brain, but not detected in lung, liver or spleen.

It is found in the cytoplasm. The protein resides in the perinuclear region. Its subcellular location is the nucleus. The protein localises to the golgi apparatus. Its function is as follows. Putative function in synaptic vesicle exocytosis by binding to Munc18-1, an essential component of the synaptic vesicle exocytotic machinery. May modulate processing of the amyloid-beta precursor protein (APP) and hence formation of APP-beta. Component of the LIN-10-LIN-2-LIN-7 complex, which associates with the motor protein KIF17 to transport vesicles containing N-methyl-D-aspartate (NMDA) receptor subunit NR2B along microtubules. This is Amyloid-beta A4 precursor protein-binding family A member 1 (APBA1) from Homo sapiens (Human).